The primary structure comprises 615 residues: MAEKFAEKTFTDPQQIRNFCIIAHIDHGKSTLADRILQLSNVVDARDMRDQYLDNMDIERERGITIKAQNVRLPWIPRTGPYAGEQIVMQMIDTPGHVDFTYEVSRALEACEGAILLVDAAQGIEAQTLANLYLAMENDLEIIPVLNKIDLPAADPEKYSLEIANIIGCEPEDVLRVSGKTGEGVEELLDKVAELIPAPTTDYPDDAPARAMIFDSVYDTYRGVVTYIRMIDGKLTPRQKIKMMSTGAVHELLEIGIVSPTPKKCSGLGPGEVGYLITGVKDVRQSKVGDTVTWAHNGAEEALQGYEEPKPMVYSGLFPISQADFPDLRDALEKLQLNDASLTYEPETSVALGFGFRCGFLGLLHMEITRDRLQREFDLDLISTAPSVNYRVVAEDGSEHRVHNPSDWPAGKLREVYEPIVKTTIIVPSDFVGTTMELCQTKRGQMDGMDYLSEDRVELRYTMPLGEIIFDFFDQLKSRTKGYASLNYEEAGEQLADLVKVDILLQGDPVDAFSAIVHRDNAQWYGNKMTKKLKELIPRQQFEVPVQAAIGSKVIARENIRALRKDVLAKCYGGDISRKRKLLEKQKEGKKRMKNIGSVSVPQEAFVAALSTDEG.

One can recognise a tr-type G domain in the interval 14-200 (QQIRNFCIIA…KVAELIPAPT (187 aa)). Residues 26–31 (DHGKST) and 147–150 (NKID) each bind GTP.

It belongs to the TRAFAC class translation factor GTPase superfamily. Classic translation factor GTPase family. LepA subfamily.

The protein resides in the cell membrane. It catalyses the reaction GTP + H2O = GDP + phosphate + H(+). Functionally, required for accurate and efficient protein synthesis under certain stress conditions. May act as a fidelity factor of the translation reaction, by catalyzing a one-codon backward translocation of tRNAs on improperly translocated ribosomes. Back-translocation proceeds from a post-translocation (POST) complex to a pre-translocation (PRE) complex, thus giving elongation factor G a second chance to translocate the tRNAs correctly. Binds to ribosomes in a GTP-dependent manner. The sequence is that of Elongation factor 4 from Corynebacterium diphtheriae (strain ATCC 700971 / NCTC 13129 / Biotype gravis).